The following is a 654-amino-acid chain: Kelch-like protein 13 (654 aa).

The BTB domain maps to 91–160 (CDVTLMPGDT…IYTAKLSLNM (70 aa)). In terms of domain architecture, BACK spans 195-296 (CVEVGRIANT…TPQELINYVQ (102 aa)). 6 Kelch repeats span residues 340–388 (RLVT…VIGN), 389–440 (FLYV…ALKG), 441–487 (FLYA…VYGG), 489–534 (MYIS…TVGD), 536–586 (LYVI…VFEN), and 587–635 (KIYV…TLTV).

Component of the BCR(KLHL9-KLHL13) E3 ubiquitin ligase complex, at least composed of CUL3, KLHL9, KLHL13 and RBX1. Interacts with AURKB.

It functions in the pathway protein modification; protein ubiquitination. Substrate-specific adapter of a BCR (BTB-CUL3-RBX1) E3 ubiquitin-protein ligase complex required for mitotic progression and cytokinesis. The BCR(KLHL9-KLHL13) E3 ubiquitin ligase complex mediates the ubiquitination of AURKB and controls the dynamic behavior of AURKB on mitotic chromosomes and thereby coordinates faithful mitotic progression and completion of cytokinesis. The chain is Kelch-like protein 13 (Klhl13) from Mus musculus (Mouse).